Reading from the N-terminus, the 766-residue chain is Lanosterol synthase ERG7 (766 aa).

Positions 1–47 are disordered; that stretch reads MVANSTGRDASALKSRKRAADSESEPLLKQGQPFPKQPRIGSELDKT. The stretch at 148–190 is one PFTB 1 repeat; it reads ATAIYNYISARAHPEDGGWGLHIEGESSVFGTLMNYVALRLVG. Asp482 functions as the Proton donor in the catalytic mechanism. PFTB repeat units lie at residues 586–626 and 635–676; these read IRTA…KHIG and SRRG…VVQT.

This sequence belongs to the terpene cyclase/mutase family.

The protein localises to the lipid droplet. The protein resides in the endoplasmic reticulum membrane. It catalyses the reaction (S)-2,3-epoxysqualene = lanosterol. Its pathway is terpene metabolism; lanosterol biosynthesis; lanosterol from farnesyl diphosphate: step 3/3. The protein operates within steroid metabolism; ergosterol biosynthesis. Its function is as follows. Lanosterol synthase; part of the third module of ergosterol biosynthesis pathway that includes the late steps of the pathway. ERG7 catalyzes the cyclization of (S)-2,3 oxidosqualene to lanosterol, a reaction that forms the sterol core. The third module or late pathway involves the ergosterol synthesis itself through consecutive reactions that mainly occur in the endoplasmic reticulum (ER) membrane. Firstly, the squalene synthase ERG9 catalyzes the condensation of 2 farnesyl pyrophosphate moieties to form squalene, which is the precursor of all steroids. Squalene synthase is crucial for balancing the incorporation of farnesyl diphosphate (FPP) into sterol and nonsterol isoprene synthesis. Secondly, squalene is converted into lanosterol by the consecutive action of the squalene epoxidase ERG1 and the lanosterol synthase ERG7. Then, the delta(24)-sterol C-methyltransferase ERG6 methylates lanosterol at C-24 to produce eburicol. Eburicol is the substrate of the sterol 14-alpha demethylase encoded by CYP51A, CYP51B and CYP51C, to yield 4,4,24-trimethyl ergosta-8,14,24(28)-trienol. CYP51B encodes the enzyme primarily responsible for sterol 14-alpha-demethylation, and plays an essential role in ascospore formation. CYP51A encodes an additional sterol 14-alpha-demethylase, induced on ergosterol depletion and responsible for the intrinsic variation in azole sensitivity. The third CYP51 isoform, CYP51C, does not encode a sterol 14-alpha-demethylase, but is required for full virulence on host wheat ears. The C-14 reductase ERG24 then reduces the C14=C15 double bond which leads to 4,4-dimethylfecosterol. A sequence of further demethylations at C-4, involving the C-4 demethylation complex containing the C-4 methylsterol oxidases ERG25, the sterol-4-alpha-carboxylate 3-dehydrogenase ERG26 and the 3-keto-steroid reductase ERG27, leads to the production of fecosterol via 4-methylfecosterol. ERG28 has a role as a scaffold to help anchor ERG25, ERG26 and ERG27 to the endoplasmic reticulum. The C-8 sterol isomerase ERG2 then catalyzes the reaction which results in unsaturation at C-7 in the B ring of sterols and thus converts fecosterol to episterol. The sterol-C5-desaturases ERG3A and ERG3BB then catalyze the introduction of a C-5 double bond in the B ring to produce 5-dehydroepisterol. The C-22 sterol desaturases ERG5A and ERG5B further convert 5-dehydroepisterol into ergosta-5,7,22,24(28)-tetraen-3beta-ol by forming the C-22(23) double bond in the sterol side chain. Finally, ergosta-5,7,22,24(28)-tetraen-3beta-ol is substrate of the C-24(28) sterol reductase ERG4 to produce ergosterol. The chain is Lanosterol synthase ERG7 from Gibberella zeae (strain ATCC MYA-4620 / CBS 123657 / FGSC 9075 / NRRL 31084 / PH-1) (Wheat head blight fungus).